The primary structure comprises 260 residues: Snake venom serine protease salmobin (260 aa).

An N-terminal signal peptide occupies residues 1–18; the sequence is MVLIKVLANHLILQLSYA. Residues 19–24 constitute a propeptide that is removed on maturation; sequence QKSSEL. Residues 25-251 form the Peptidase S1 domain; that stretch reads VIGGDECNIN…YTDWIQSIIA (227 aa). Intrachain disulfides connect Cys31/Cys165, Cys52/Cys68, Cys102/Cys258, Cys144/Cys212, Cys176/Cys191, and Cys202/Cys227. Residue His67 is the Charge relay system of the active site. Residue Asn105 is glycosylated (N-linked (GlcNAc...) asparagine). Asp112 acts as the Charge relay system in catalysis. Residues Asn123 and Asn156 are each glycosylated (N-linked (GlcNAc...) asparagine). Catalysis depends on Ser206, which acts as the Charge relay system.

It belongs to the peptidase S1 family. Snake venom subfamily. Monomer. In terms of tissue distribution, expressed by the venom gland.

The protein localises to the secreted. Its function is as follows. Snake venom serine protease that may act in the hemostasis system of the prey. This is Snake venom serine protease salmobin from Gloydius halys (Chinese water mocassin).